Consider the following 225-residue polypeptide: Glutathione S-transferase A (225 aa).

The region spanning 3–85 (KDMTLLWGSG…YLESQFKSQG (83 aa)) is the GST N-terminal domain. R18 is a glutathione binding site. In terms of domain architecture, GST C-terminal spans 92-217 (CPAEQAMMYQ…WPPTWLESPQ (126 aa)).

This sequence belongs to the GST superfamily. Theta family. In terms of assembly, homodimer. As to expression, found in all the tissues examined. Highest values found in liver and in intestinal mucosa.

It is found in the cytoplasm. The catalysed reaction is RX + glutathione = an S-substituted glutathione + a halide anion + H(+). Its function is as follows. Conjugation of reduced glutathione to a wide number of exogenous and endogenous hydrophobic electrophiles. The chain is Glutathione S-transferase A from Pleuronectes platessa (European plaice).